A 23-amino-acid polypeptide reads, in one-letter code: Magainin-B2 (23 aa).

As to expression, expressed by the skin glands.

Its subcellular location is the secreted. Functionally, has antimicrobial activity against Gram-negative bacterium E.coli ATCC 25922 (MIC=50 uM) and against fungus C.albicans ATCC 90028 (MIC=100 uM). Has no hemolytic activity against human erythrocytes even at high concentrations. This Xenopus borealis (Kenyan clawed frog) protein is Magainin-B2.